We begin with the raw amino-acid sequence, 423 residues long: Transcription factor IIIB 50 kDa subunit (423 aa).

Residues Met-1–Ser-34 form a TFIIB-type zinc finger. The Zn(2+) site is built by Cys-5, Cys-8, Cys-26, and Cys-29. Residues Leu-171–Lys-245 form repeat 2. The segment covering Gln-325–Ser-340 has biased composition (low complexity). The disordered stretch occupies residues Gln-325–Leu-358. Cys-373 is modified (cysteine sulfenic acid (-SOH)).

This sequence belongs to the TFIIB family. As to quaternary structure, component of TFIIIB complexes. Interacts with TBP and forms a ternary complex with TBp and target DNA sequences. In response to oxidative stress, a Cys-residue is reversibly oxidized to cysteine sulfenic acid. This impairs formation of a ternary complex with TBP and DNA and down-regulates expression of target genes in response to oxidative stress.

The protein resides in the nucleus. Functionally, general activator of RNA polymerase III transcription. Factor exclusively required for RNA polymerase III transcription of genes with promoter elements upstream of the initiation sites. Contributes to the regulation of gene expression; functions as activator in the absence of oxidative stress. Down-regulates expression of target genes in response to oxidative stress. Overexpression protects cells against apoptosis in response to oxidative stress. The protein is Transcription factor IIIB 50 kDa subunit (brf2) of Danio rerio (Zebrafish).